Here is a 153-residue protein sequence, read N- to C-terminus: NAD(P)H-quinone oxidoreductase subunit N (153 aa).

It belongs to the complex I NdhN subunit family. As to quaternary structure, NDH-1 can be composed of about 15 different subunits; different subcomplexes with different compositions have been identified which probably have different functions.

It is found in the cellular thylakoid membrane. It catalyses the reaction a plastoquinone + NADH + (n+1) H(+)(in) = a plastoquinol + NAD(+) + n H(+)(out). It carries out the reaction a plastoquinone + NADPH + (n+1) H(+)(in) = a plastoquinol + NADP(+) + n H(+)(out). In terms of biological role, NDH-1 shuttles electrons from an unknown electron donor, via FMN and iron-sulfur (Fe-S) centers, to quinones in the respiratory and/or the photosynthetic chain. The immediate electron acceptor for the enzyme in this species is believed to be plastoquinone. Couples the redox reaction to proton translocation, and thus conserves the redox energy in a proton gradient. Cyanobacterial NDH-1 also plays a role in inorganic carbon-concentration. The sequence is that of NAD(P)H-quinone oxidoreductase subunit N from Synechococcus sp. (strain CC9605).